We begin with the raw amino-acid sequence, 852 residues long: 2-deoxy-glucose resistant protein 2 (852 aa).

Residues 1–18 are compositionally biased toward polar residues; it reads MFKSKTSTLSYDETPNSN. A disordered region spans residues 1 to 60; that stretch reads MFKSKTSTLSYDETPNSNEGDRNATPVNPKEKSQTKHLNIPGDRSRHSSIADSKRSSSRY. WD repeat units follow at residues 171–210, 278–316, 318–358, 426–471, 476–515, and 651–689; these read LFKN…VKRS, EHAL…SLKT, VHPD…VSYA, QHGP…ELFK, GSSR…LSAE, and GFSS…EIRK. Phosphoserine is present on Ser716. A disordered region spans residues 723–748; the sequence is DERSSTEDNEFSTTPPSNTHNSRPSH. The segment covering 733–744 has biased composition (polar residues); that stretch reads FSTTPPSNTHNS.

The protein belongs to the WD repeat DGR2 family.

This is 2-deoxy-glucose resistant protein 2 (DGR2) from Saccharomyces cerevisiae (strain ATCC 204508 / S288c) (Baker's yeast).